A 436-amino-acid chain; its full sequence is GTPase Der (436 aa).

EngA-type G domains lie at 3–168 and 177–352; these read PLIA…PESD and IRLA…QNRS. GTP contacts are provided by residues 9–16, 56–60, 120–123, 183–190, 230–234, and 295–298; these read GRPNVGKS, DTGGY, NKAE, DTAGL, and NKWD. Residues 353–436 form the KH-like domain; the sequence is RKISTSALNR…VTISLRFMQK (84 aa).

It belongs to the TRAFAC class TrmE-Era-EngA-EngB-Septin-like GTPase superfamily. EngA (Der) GTPase family. Associates with the 50S ribosomal subunit.

GTPase that plays an essential role in the late steps of ribosome biogenesis. The chain is GTPase Der from Chlorobium luteolum (strain DSM 273 / BCRC 81028 / 2530) (Pelodictyon luteolum).